Here is a 384-residue protein sequence, read N- to C-terminus: Sphingosine kinase 1 (384 aa).

The region spanning 12–159 (PRPCRVLVLL…MNLLSLHTAS (148 aa)) is the DAGKc domain. ATP contacts are provided by residues 22–24 (NPR) and 54–58 (TERRN). Residue 79–82 (SGDG) coordinates substrate. Aspartate 81 acts as the Proton donor/acceptor in catalysis. ATP contacts are provided by residues glutamate 86 and 111–113 (GSG). 2 short sequence motifs (nuclear export signal) span residues 147–155 (LSPMNLLSL) and 161–169 (LRLFSVLSL). Position 178 (aspartate 178) interacts with substrate. Positions 185 and 191 each coordinate ATP. Threonine 193 carries the phosphothreonine modification. Serine 225 carries the post-translational modification Phosphoserine. Position 341–343 (341–343 (DGE)) interacts with ATP.

As to quaternary structure, interacts with ACY1. Binds to calmodulin. Interacts with SPHKAP. Interacts with CIB1, the interaction occurs in a calcium-dependent manner. Interacts with TRAF2. Interacts with EEF1A1; the interaction enhances SPHK1 kinase activity. The cofactor is Mg(2+). Widely expressed with highest levels in adult liver, kidney, heart and skeletal muscle. Expressed in brain cortex (at protein level).

Its subcellular location is the cytoplasm. It localises to the nucleus. The protein localises to the cell membrane. It is found in the endosome membrane. The protein resides in the membrane. Its subcellular location is the clathrin-coated pit. It localises to the synapse. The enzyme catalyses a sphingoid base + ATP = a sphingoid 1-phosphate + ADP + H(+). It catalyses the reaction L-seryl-[protein] + acetyl-CoA = O-acetyl-L-seryl-[protein] + CoA. The catalysed reaction is sphinganine + ATP = sphinganine 1-phosphate + ADP + H(+). It carries out the reaction sphing-4-enine + ATP = sphing-4-enine 1-phosphate + ADP + H(+). The enzyme catalyses 1-O-hexadecyl-2-amino-sn-glycerol + ATP = 1-O-hexadecyl-2-desoxy-2-amino-sn-glycero-3-phosphate + ADP + H(+). With respect to regulation, acetyltransferase activity increases in presence of the kinase substrate, sphingosine. In Purkinje cells, kinase activity on sphingosine increases in presence of VEGFA. In neurons, kinase activity increases during the first 24h in presence of Amyloid-beta protein 42 to decrease after 96h. Catalyzes the phosphorylation of sphingosine to form sphingosine 1-phosphate (SPP), a lipid mediator with both intra- and extracellular functions. Also acts on D-erythro-sphingosine and to a lesser extent sphinganine, but not other lipids, such as D,L-threo-dihydrosphingosine, N,N-dimethylsphingosine, diacylglycerol, ceramide, or phosphatidylinositol. In contrast to proapoptotic SPHK2, has a negative effect on intracellular ceramide levels, enhances cell growth and inhibits apoptosis. Involved in the regulation of inflammatory response and neuroinflammation. Via the product sphingosine 1-phosphate, stimulates TRAF2 E3 ubiquitin ligase activity, and promotes activation of NF-kappa-B in response to TNF signaling leading to IL17 secretion. In response to TNF and in parallel to NF-kappa-B activation, negatively regulates RANTES induction through p38 MAPK signaling pathway. Involved in endocytic membrane trafficking induced by sphingosine, recruited to dilate endosomes, also plays a role on later stages of endosomal maturation and membrane fusion independently of its kinase activity. In Purkinje cells, seems to be also involved in the regulation of autophagosome-lysosome fusion upon VEGFA. In terms of biological role, has serine acetyltransferase activity on PTGS2/COX2 in an acetyl-CoA dependent manner. The acetyltransferase activity increases in presence of the kinase substrate, sphingosine. During neuroinflammation, through PTGS2 acetylation, promotes neuronal secretion of specialized preresolving mediators (SPMs), especially 15-R-lipoxin A4, which results in an increase of phagocytic microglia. This Homo sapiens (Human) protein is Sphingosine kinase 1.